Here is a 115-residue protein sequence, read N- to C-terminus: Delta-hexatoxin-Hi1a (115 aa).

A signal peptide spans 1-18; it reads MKVIATLYGLLFLTVVLG. A propeptide spanning residues 19–73 is cleaved from the precursor; sequence DITEGNENDLVENFREELSEADIPLLKKLEAIEDALLEKDFLPYEEEDRNARPKR. Intrachain disulfides connect Cys-74-Cys-88, Cys-81-Cys-93, Cys-87-Cys-104, and Cys-89-Cys-115.

It belongs to the neurotoxin 06 (delta-actx) family. Expressed by the venom gland.

The protein resides in the secreted. Functionally, neurotoxin that slows inactivation of voltage-gated sodium channels (Nav). In vivo, is lethal to both vertebrates and insects. The chain is Delta-hexatoxin-Hi1a from Hadronyche infensa (Fraser island funnel-web spider).